The following is a 118-amino-acid chain: Small ribosomal subunit protein uS13 (118 aa).

The tract at residues 94-118 is disordered; sequence SLPVRGQRTKTNARTRKGPRKAIKK.

The protein belongs to the universal ribosomal protein uS13 family. In terms of assembly, part of the 30S ribosomal subunit. Forms a loose heterodimer with protein S19. Forms two bridges to the 50S subunit in the 70S ribosome.

Located at the top of the head of the 30S subunit, it contacts several helices of the 16S rRNA. In the 70S ribosome it contacts the 23S rRNA (bridge B1a) and protein L5 of the 50S subunit (bridge B1b), connecting the 2 subunits; these bridges are implicated in subunit movement. Contacts the tRNAs in the A and P-sites. The protein is Small ribosomal subunit protein uS13 of Aeromonas hydrophila subsp. hydrophila (strain ATCC 7966 / DSM 30187 / BCRC 13018 / CCUG 14551 / JCM 1027 / KCTC 2358 / NCIMB 9240 / NCTC 8049).